A 221-amino-acid polypeptide reads, in one-letter code: Histone H1.3 (221 aa).

Positions 1–17 (MSETAPVAPAAPAPAEK) are enriched in low complexity. The disordered stretch occupies residues 1–42 (MSETAPVAPAAPAPAEKTPVKKKAKKSGVAAGKRKASGPPVS). Ser-2 is modified (N-acetylserine). The residue at position 2 (Ser-2) is a Phosphoserine. Lys-17 carries the N6-acetyllysine modification. A Phosphothreonine modification is found at Thr-18. Positions 20 to 36 (VKKKAKKSGVAAGKRKA) are enriched in basic residues. 2 positions are modified to N6-(beta-hydroxybutyryl)lysine: Lys-35 and Lys-53. Positions 37–110 (SGPPVSELIT…GASGSFKLNK (74 aa)) constitute an H15 domain. Residue Arg-55 is modified to Citrulline. 3 positions are modified to N6-(beta-hydroxybutyryl)lysine: Lys-65, Lys-86, and Lys-91. The interval 87-221 (SLVSKGTLVQ…KAKKAVSKKK (135 aa)) is disordered. Position 105 is a phosphoserine; by PKC (Ser-105). Residue Lys-107 is modified to N6-(beta-hydroxybutyryl)lysine. 4 stretches are compositionally biased toward basic residues: residues 120-141 (KGKK…KPKK), 150-161 (KAAKKTPKKVKK), 170-187 (KVAK…KKPT), and 194-221 (KAPK…SKKK).

Belongs to the histone H1/H5 family. Post-translationally, H1 histones are progressively phosphorylated during the cell cycle, becoming maximally phosphorylated during late G2 phase and M phase, and being dephosphorylated sharply thereafter. Citrullination at Arg-55 (H1R54ci) by PADI4 takes place within the DNA-binding site of H1 and results in its displacement from chromatin and global chromatin decondensation, thereby promoting pluripotency and stem cell maintenance.

The protein localises to the nucleus. It localises to the chromosome. Functionally, H1 histones bind to linker DNA between nucleosomes forming the macromolecular structure known as the chromatin fiber. H1 histones are necessary for the condensation of nucleosome chains into higher-order structured fibers. Also acts as a regulator of individual gene transcription through chromatin remodeling, nucleosome spacing and DNA methylation. This chain is Histone H1.3, found in Bos taurus (Bovine).